A 131-amino-acid chain; its full sequence is Phosphoribosyl-AMP cyclohydrolase (131 aa).

Position 78 (Asp78) interacts with Mg(2+). Cys79 is a binding site for Zn(2+). Residues Asp80 and Asp82 each coordinate Mg(2+). Zn(2+) contacts are provided by Cys96 and Cys103.

It belongs to the PRA-CH family. In terms of assembly, homodimer. Requires Mg(2+) as cofactor. Zn(2+) serves as cofactor.

The protein resides in the cytoplasm. It carries out the reaction 1-(5-phospho-beta-D-ribosyl)-5'-AMP + H2O = 1-(5-phospho-beta-D-ribosyl)-5-[(5-phospho-beta-D-ribosylamino)methylideneamino]imidazole-4-carboxamide. It functions in the pathway amino-acid biosynthesis; L-histidine biosynthesis; L-histidine from 5-phospho-alpha-D-ribose 1-diphosphate: step 3/9. In terms of biological role, catalyzes the hydrolysis of the adenine ring of phosphoribosyl-AMP. The chain is Phosphoribosyl-AMP cyclohydrolase from Neisseria meningitidis serogroup A / serotype 4A (strain DSM 15465 / Z2491).